Reading from the N-terminus, the 731-residue chain is MSRRDKMIAKIKELMYKPEYIRNIGICAHIDHGKTTLSDNLLAGAGLISEDLAGEALGMDTKKDEQERGITIDAANASMVQEYEGEQYLINLIDTPGHVDFGGDVTRAMRAVDGAVVVVCAVDGVMPQTETVLKQALRENVKPVLFINKVDRLINELKLGPEELLKQLTSIIVEVNALIKSLAPKDKKNEWMVNVEEGSVAFGSAFKNWAINIPKMQETKFTFKDIIDYCNEGKEDELKQLLPLTEVLLNMVVKHLPSPNVAQVYRVPKIWDGDIESEVGQTMIKMSPDGPLAGMITNVAVDKHAGIVATCRIYGGTLEKSSEIYLVGSHGKARVQQAGIFMGAETIDTGKVPVGNIAYLTGVKGASAGETICSADCIIDEFEPIDHISEPVVTVAVEAKNTKDLPKLIEVLRQVSKEDPTIKVEINETTGEQLISGMGELHLEVVTNRIINDKKLEILVSEPIIVYKESVLGHSPVIEGKSPNKHNRFYIDVQPLDKPLYDALIEGDLKEGRIKTKETAQDFIELGMDKEEARRVWDVYNRSMFINMTRGIQYLDEVKELLLEGFEAALKDGPLANEEAVGLKFILSDAKLHEDAVHRGPAQVLPAIKKAIYASIMSANPCLLEPIQKVFISAPLEYMGNCNKDIQNRRGRIIGQETKGVIAEMDFEVPIAKMFGFAGDIRSATGGKGDFSTEMKGFETLPIYLQDDIVRQIRTRKGLSPEPYGPEHYSA.

One can recognise a tr-type G domain in the interval 19–234; that stretch reads EYIRNIGICA…DIIDYCNEGK (216 aa). GTP contacts are provided by residues 28-35, 94-98, and 148-151; these read AHIDHGKT, DTPGH, and NKVD. A Diphthamide modification is found at His-598.

It belongs to the TRAFAC class translation factor GTPase superfamily. Classic translation factor GTPase family. EF-G/EF-2 subfamily.

The protein localises to the cytoplasm. Catalyzes the GTP-dependent ribosomal translocation step during translation elongation. During this step, the ribosome changes from the pre-translocational (PRE) to the post-translocational (POST) state as the newly formed A-site-bound peptidyl-tRNA and P-site-bound deacylated tRNA move to the P and E sites, respectively. Catalyzes the coordinated movement of the two tRNA molecules, the mRNA and conformational changes in the ribosome. The protein is Elongation factor 2 of Methanobrevibacter ruminantium (strain ATCC 35063 / DSM 1093 / JCM 13430 / OCM 146 / M1) (Methanobacterium ruminantium).